A 1057-amino-acid polypeptide reads, in one-letter code: Atrial natriuretic peptide receptor 1 (1057 aa).

A signal peptide spans 1–28 (MPGSRRVRPRLRALLLLPPLLLLRSGHA). Topologically, residues 29–469 (SDLTVAVVLP…CNQDHFSTLE (441 aa)) are extracellular. Asparagine 41 carries an N-linked (GlcNAc...) asparagine glycan. Chloride is bound by residues serine 81, glycine 113, and cysteine 114. Disulfide bonds link cysteine 88-cysteine 114 and cysteine 192-cysteine 241. Asparagine 208, asparagine 334, asparagine 375, asparagine 382, and asparagine 423 each carry an N-linked (GlcNAc...) asparagine glycan. The cysteines at positions 451 and 460 are disulfide-linked. A helical transmembrane segment spans residues 470 to 490 (VLALVGSLSLVSFLIVSFFIY). Residues 491 to 1057 (RKMQLEKELV…LGERGCSTRG (567 aa)) are Cytoplasmic-facing. A phosphoserine mark is found at serine 515 and serine 525. A Protein kinase domain is found at 524 to 801 (GSRLTLSGRG…QIRLALRKFN (278 aa)). Threonine 528 carries the post-translational modification Phosphothreonine. 3 positions are modified to phosphoserine: serine 530, serine 534, and serine 538. Phosphothreonine is present on threonine 541. Positions 872–1002 (TIYFSDIVGF…DTVNTASRME (131 aa)) constitute a Guanylate cyclase domain.

The protein belongs to the adenylyl cyclase class-4/guanylyl cyclase family. In terms of assembly, homodimer. Phosphorylation of the protein kinase-like domain is required for full activation by ANP.

The protein resides in the membrane. It carries out the reaction GTP = 3',5'-cyclic GMP + diphosphate. In terms of biological role, receptor for the atrial natriuretic peptide NPPA/ANP and the brain natriuretic peptide NPPB/BNP which are potent vasoactive hormones playing a key role in cardiovascular homeostasis. Plays an essential role in the regulation of endothelial cell senescence and vascular aging. Upon activation by ANP or BNP, stimulates the production of cyclic guanosine monophosphate (cGMP) that promotes vascular tone and volume homeostasis by activation of protein kinase cGMP-dependent 1/PRKG1 and subsequently PRKAA1, thereby controlling blood pressure and maintaining cardiovascular homeostasis. In Mus musculus (Mouse), this protein is Atrial natriuretic peptide receptor 1 (Npr1).